A 179-amino-acid chain; its full sequence is UPF0302 protein BPUM_1989 (179 aa).

It belongs to the UPF0302 family.

The chain is UPF0302 protein BPUM_1989 from Bacillus pumilus (strain SAFR-032).